We begin with the raw amino-acid sequence, 152 residues long: MSEKYVVTWDVLQMHTRKLAARLLPAERWTGIIAVSRGGLVPAAILARELGIRHVDTVCISSYDHDNQRELRVLKCAEGDGEGFIVVDDLVDTGGTAQAIRDMYPKAHFVTIFAKPAGRPLVDDYVVDIPQNTWIEQPWDMGVSFVEPLSGR.

Residues Arg37 to Gly38, Arg69, and Asp88 to Thr96 contribute to the 5-phospho-alpha-D-ribose 1-diphosphate site. Arg69 serves as a coordination point for GMP. A Mg(2+)-binding site is contributed by Asp89. Guanine is bound by residues Asp92 and Ile135. Residues Asp92 and Ile135 each coordinate xanthine. Residues Asp92–Thr96 and Trp134–Ile135 contribute to the GMP site.

It belongs to the purine/pyrimidine phosphoribosyltransferase family. XGPT subfamily. Homotetramer. Mg(2+) serves as cofactor.

It localises to the cell inner membrane. The enzyme catalyses GMP + diphosphate = guanine + 5-phospho-alpha-D-ribose 1-diphosphate. It catalyses the reaction XMP + diphosphate = xanthine + 5-phospho-alpha-D-ribose 1-diphosphate. It carries out the reaction IMP + diphosphate = hypoxanthine + 5-phospho-alpha-D-ribose 1-diphosphate. It participates in purine metabolism; GMP biosynthesis via salvage pathway; GMP from guanine: step 1/1. It functions in the pathway purine metabolism; XMP biosynthesis via salvage pathway; XMP from xanthine: step 1/1. Functionally, purine salvage pathway enzyme that catalyzes the transfer of the ribosyl-5-phosphate group from 5-phospho-alpha-D-ribose 1-diphosphate (PRPP) to the N9 position of the 6-oxopurines guanine and xanthine to form the corresponding ribonucleotides GMP (guanosine 5'-monophosphate) and XMP (xanthosine 5'-monophosphate), with the release of PPi. To a lesser extent, also acts on hypoxanthine. This is Xanthine-guanine phosphoribosyltransferase from Edwardsiella ictaluri (strain 93-146).